A 75-amino-acid chain; its full sequence is Translation initiation factor IF-1 (75 aa).

The S1-like domain occupies 1–72; sequence MSKQDLIEME…TKGRITYRLK (72 aa).

This sequence belongs to the IF-1 family. In terms of assembly, component of the 30S ribosomal translation pre-initiation complex which assembles on the 30S ribosome in the order IF-2 and IF-3, IF-1 and N-formylmethionyl-tRNA(fMet); mRNA recruitment can occur at any time during PIC assembly.

The protein localises to the cytoplasm. Functionally, one of the essential components for the initiation of protein synthesis. Stabilizes the binding of IF-2 and IF-3 on the 30S subunit to which N-formylmethionyl-tRNA(fMet) subsequently binds. Helps modulate mRNA selection, yielding the 30S pre-initiation complex (PIC). Upon addition of the 50S ribosomal subunit IF-1, IF-2 and IF-3 are released leaving the mature 70S translation initiation complex. The protein is Translation initiation factor IF-1 of Synechocystis sp. (strain ATCC 27184 / PCC 6803 / Kazusa).